A 273-amino-acid chain; its full sequence is NAD kinase (273 aa).

The active-site Proton acceptor is aspartate 53. Residues 53-54, arginine 58, 128-129, aspartate 157, 168-173, and alanine 192 contribute to the NAD(+) site; these read DG, NE, and TAYNFS.

Belongs to the NAD kinase family. A divalent metal cation is required as a cofactor.

Its subcellular location is the cytoplasm. The enzyme catalyses NAD(+) + ATP = ADP + NADP(+) + H(+). In terms of biological role, involved in the regulation of the intracellular balance of NAD and NADP, and is a key enzyme in the biosynthesis of NADP. Catalyzes specifically the phosphorylation on 2'-hydroxyl of the adenosine moiety of NAD to yield NADP. This Finegoldia magna (strain ATCC 29328 / DSM 20472 / WAL 2508) (Peptostreptococcus magnus) protein is NAD kinase.